Consider the following 348-residue polypeptide: Probable dual-specificity RNA methyltransferase RlmN (348 aa).

Catalysis depends on Glu93, which acts as the Proton acceptor. The 235-residue stretch at 99 to 333 (TEKRLTACLS…VSLRKSRGSD (235 aa)) folds into the Radical SAM core domain. Cys106 and Cys338 are oxidised to a cystine. [4Fe-4S] cluster is bound by residues Cys113, Cys117, and Cys120. Residues 160 to 161 (GE), Ser190, 219 to 221 (SLH), and Asn295 each bind S-adenosyl-L-methionine. Cys338 (S-methylcysteine intermediate) is an active-site residue.

This sequence belongs to the radical SAM superfamily. RlmN family. The cofactor is [4Fe-4S] cluster.

It is found in the cytoplasm. The catalysed reaction is adenosine(2503) in 23S rRNA + 2 reduced [2Fe-2S]-[ferredoxin] + 2 S-adenosyl-L-methionine = 2-methyladenosine(2503) in 23S rRNA + 5'-deoxyadenosine + L-methionine + 2 oxidized [2Fe-2S]-[ferredoxin] + S-adenosyl-L-homocysteine. It catalyses the reaction adenosine(37) in tRNA + 2 reduced [2Fe-2S]-[ferredoxin] + 2 S-adenosyl-L-methionine = 2-methyladenosine(37) in tRNA + 5'-deoxyadenosine + L-methionine + 2 oxidized [2Fe-2S]-[ferredoxin] + S-adenosyl-L-homocysteine. Its function is as follows. Specifically methylates position 2 of adenine 2503 in 23S rRNA and position 2 of adenine 37 in tRNAs. This Prochlorococcus marinus (strain MIT 9515) protein is Probable dual-specificity RNA methyltransferase RlmN.